A 189-amino-acid chain; its full sequence is Transcription factor FapR (189 aa).

Belongs to the FapR family.

In terms of biological role, transcriptional factor involved in regulation of membrane lipid biosynthesis by repressing genes involved in fatty acid and phospholipid metabolism. The polypeptide is Transcription factor FapR (Listeria monocytogenes serotype 4a (strain HCC23)).